The sequence spans 304 residues: Acetyl-coenzyme A carboxylase carboxyl transferase subunit beta (304 aa).

The 270-residue stretch at 25–294 (LWIKCPETGE…EAARRESGSQ (270 aa)) folds into the CoA carboxyltransferase N-terminal domain.

It belongs to the AccD/PCCB family. In terms of assembly, acetyl-CoA carboxylase is a heterohexamer composed of biotin carboxyl carrier protein (AccB), biotin carboxylase (AccC) and two subunits each of ACCase subunit alpha (AccA) and ACCase subunit beta (AccD).

It localises to the cytoplasm. The catalysed reaction is N(6)-carboxybiotinyl-L-lysyl-[protein] + acetyl-CoA = N(6)-biotinyl-L-lysyl-[protein] + malonyl-CoA. Its pathway is lipid metabolism; malonyl-CoA biosynthesis; malonyl-CoA from acetyl-CoA: step 1/1. Its function is as follows. Component of the acetyl coenzyme A carboxylase (ACC) complex. Biotin carboxylase (BC) catalyzes the carboxylation of biotin on its carrier protein (BCCP) and then the CO(2) group is transferred by the transcarboxylase to acetyl-CoA to form malonyl-CoA. This chain is Acetyl-coenzyme A carboxylase carboxyl transferase subunit beta, found in Sinorhizobium fredii (strain NBRC 101917 / NGR234).